Reading from the N-terminus, the 610-residue chain is Phosphomethylpyrimidine synthase (610 aa).

Residues Asn-216, Met-245, Tyr-274, His-310, 330 to 332, 371 to 374, and Glu-410 each bind substrate; these read SRG and DGLR. Residue His-414 participates in Zn(2+) binding. Residue Tyr-437 participates in substrate binding. His-478 contacts Zn(2+). The [4Fe-4S] cluster site is built by Cys-558, Cys-561, and Cys-566.

It belongs to the ThiC family. In terms of assembly, homodimer. It depends on [4Fe-4S] cluster as a cofactor.

The enzyme catalyses 5-amino-1-(5-phospho-beta-D-ribosyl)imidazole + S-adenosyl-L-methionine = 4-amino-2-methyl-5-(phosphooxymethyl)pyrimidine + CO + 5'-deoxyadenosine + formate + L-methionine + 3 H(+). The protein operates within cofactor biosynthesis; thiamine diphosphate biosynthesis. Its function is as follows. Catalyzes the synthesis of the hydroxymethylpyrimidine phosphate (HMP-P) moiety of thiamine from aminoimidazole ribotide (AIR) in a radical S-adenosyl-L-methionine (SAM)-dependent reaction. The protein is Phosphomethylpyrimidine synthase of Rhizobium etli (strain ATCC 51251 / DSM 11541 / JCM 21823 / NBRC 15573 / CFN 42).